A 486-amino-acid chain; its full sequence is ATP synthase subunit beta (486 aa).

171–178 (GGAGVGKT) serves as a coordination point for ATP.

The protein belongs to the ATPase alpha/beta chains family. F-type ATPases have 2 components, CF(1) - the catalytic core - and CF(0) - the membrane proton channel. CF(1) has five subunits: alpha(3), beta(3), gamma(1), delta(1), epsilon(1). CF(0) has three main subunits: a(1), b(2) and c(9-12). The alpha and beta chains form an alternating ring which encloses part of the gamma chain. CF(1) is attached to CF(0) by a central stalk formed by the gamma and epsilon chains, while a peripheral stalk is formed by the delta and b chains.

It localises to the cell membrane. It catalyses the reaction ATP + H2O + 4 H(+)(in) = ADP + phosphate + 5 H(+)(out). Produces ATP from ADP in the presence of a proton gradient across the membrane. The catalytic sites are hosted primarily by the beta subunits. The polypeptide is ATP synthase subunit beta (Salinispora tropica (strain ATCC BAA-916 / DSM 44818 / JCM 13857 / NBRC 105044 / CNB-440)).